A 215-amino-acid chain; its full sequence is Pyrrolidone-carboxylate peptidase (215 aa).

Active-site residues include E80, C143, and H167.

It belongs to the peptidase C15 family. Homotetramer.

The protein resides in the cytoplasm. The enzyme catalyses Release of an N-terminal pyroglutamyl group from a polypeptide, the second amino acid generally not being Pro.. Removes 5-oxoproline from various penultimate amino acid residues except L-proline. The sequence is that of Pyrrolidone-carboxylate peptidase from Bacillus cereus (strain ATCC 10987 / NRS 248).